The chain runs to 580 residues: 2-succinyl-5-enolpyruvyl-6-hydroxy-3-cyclohexene-1-carboxylate synthase (580 aa).

The segment at 178-199 (LEPTPMPGDLTEPPAAAQPRDD) is disordered.

The protein belongs to the TPP enzyme family. MenD subfamily. In terms of assembly, homodimer. Requires Mg(2+) as cofactor. It depends on Mn(2+) as a cofactor. Thiamine diphosphate serves as cofactor.

It carries out the reaction isochorismate + 2-oxoglutarate + H(+) = 5-enolpyruvoyl-6-hydroxy-2-succinyl-cyclohex-3-ene-1-carboxylate + CO2. It participates in quinol/quinone metabolism; 1,4-dihydroxy-2-naphthoate biosynthesis; 1,4-dihydroxy-2-naphthoate from chorismate: step 2/7. It functions in the pathway quinol/quinone metabolism; menaquinone biosynthesis. In terms of biological role, catalyzes the thiamine diphosphate-dependent decarboxylation of 2-oxoglutarate and the subsequent addition of the resulting succinic semialdehyde-thiamine pyrophosphate anion to isochorismate to yield 2-succinyl-5-enolpyruvyl-6-hydroxy-3-cyclohexene-1-carboxylate (SEPHCHC). In Roseiflexus castenholzii (strain DSM 13941 / HLO8), this protein is 2-succinyl-5-enolpyruvyl-6-hydroxy-3-cyclohexene-1-carboxylate synthase.